A 328-amino-acid polypeptide reads, in one-letter code: Malate dehydrogenase (328 aa).

NAD(+) is bound at residue 12-18 (GAAGQIG). Residues Arg95 and Arg101 each contribute to the substrate site. NAD(+) contacts are provided by residues Asn108, Gln115, and 132–134 (VGN). Residues Asn134 and Arg165 each coordinate substrate. His190 serves as the catalytic Proton acceptor.

The protein belongs to the LDH/MDH superfamily. MDH type 2 family.

It catalyses the reaction (S)-malate + NAD(+) = oxaloacetate + NADH + H(+). Its function is as follows. Catalyzes the reversible oxidation of malate to oxaloacetate. The polypeptide is Malate dehydrogenase (Polaromonas naphthalenivorans (strain CJ2)).